Here is a 207-residue protein sequence, read N- to C-terminus: Holliday junction branch migration complex subunit RuvA (207 aa).

The segment at 1-64 (MIGLINGQVQ…EDAQLLYGFI (64 aa)) is domain I. The interval 65-143 (DRKERDVFRQ…NIEVDSSHLE (79 aa)) is domain II. The tract at residues 144–152 (FAMQPAPIS) is flexible linker. The segment at 153-207 (AEGSIIAEVEGALISLGYKEREAQQAIKAAKSNGETFADTQSLLKATLQQFQSFK) is domain III.

It belongs to the RuvA family. Homotetramer. Forms an RuvA(8)-RuvB(12)-Holliday junction (HJ) complex. HJ DNA is sandwiched between 2 RuvA tetramers; dsDNA enters through RuvA and exits via RuvB. An RuvB hexamer assembles on each DNA strand where it exits the tetramer. Each RuvB hexamer is contacted by two RuvA subunits (via domain III) on 2 adjacent RuvB subunits; this complex drives branch migration. In the full resolvosome a probable DNA-RuvA(4)-RuvB(12)-RuvC(2) complex forms which resolves the HJ.

The protein resides in the cytoplasm. The RuvA-RuvB-RuvC complex processes Holliday junction (HJ) DNA during genetic recombination and DNA repair, while the RuvA-RuvB complex plays an important role in the rescue of blocked DNA replication forks via replication fork reversal (RFR). RuvA specifically binds to HJ cruciform DNA, conferring on it an open structure. The RuvB hexamer acts as an ATP-dependent pump, pulling dsDNA into and through the RuvAB complex. HJ branch migration allows RuvC to scan DNA until it finds its consensus sequence, where it cleaves and resolves the cruciform DNA. In Psychrobacter cryohalolentis (strain ATCC BAA-1226 / DSM 17306 / VKM B-2378 / K5), this protein is Holliday junction branch migration complex subunit RuvA.